The chain runs to 138 residues: Basic phospholipase A2 PLA-B' (138 aa).

An N-terminal signal peptide occupies residues 1–16 (MRTLWITAVLLVGVEG). Disulfide bonds link cysteine 42/cysteine 131, cysteine 44/cysteine 60, cysteine 59/cysteine 111, cysteine 65/cysteine 138, cysteine 66/cysteine 104, cysteine 73/cysteine 97, and cysteine 91/cysteine 102. Ca(2+) contacts are provided by tyrosine 43, glycine 45, and glycine 47. The active site involves histidine 63. Residue aspartate 64 participates in Ca(2+) binding. Residue aspartate 105 is part of the active site.

The protein belongs to the phospholipase A2 family. Group II subfamily. D49 sub-subfamily. Ca(2+) is required as a cofactor. Expressed by the venom gland.

It is found in the secreted. It catalyses the reaction a 1,2-diacyl-sn-glycero-3-phosphocholine + H2O = a 1-acyl-sn-glycero-3-phosphocholine + a fatty acid + H(+). Functionally, PLA2 catalyzes the calcium-dependent hydrolysis of the 2-acyl groups in 3-sn-phosphoglycerides. In Protobothrops flavoviridis (Habu), this protein is Basic phospholipase A2 PLA-B'.